The following is a 165-amino-acid chain: MELCRSLALLGGSLGLMFCLIALSTDFWFEAVGPTHSAHSGLWPTGHGDIISGYIHVTQTFSIMAVLWALVSVSFLVLSCFPSLFPPGHGPLVSTTAAFAAAISMVVAMAVYTSERWDQPPHPQIQTFFSWSFYLGWVSAILLLCTGALSLGAHCGGPRPGYETL.

The next 4 membrane-spanning stretches (helical) occupy residues 9 to 29, 61 to 81, 92 to 112, and 133 to 153; these read LLGG…DFWF, FSIM…LSCF, LVST…MAVY, and FYLG…SLGA.

Belongs to the PMP-22/EMP/MP20 family. In terms of tissue distribution, expressed in activated T-cells, in kidney, liver, lung and pancreas. Not expressed in brain, heart, or skeletal muscle. Expressed at high levels in TCR gamma delta-expressing CTL clones, and in some TCR alpha beta-expressing CTL clones (both CD4+ and CD8+), but is not expressed in other TCR alpha beta-expressing CTL clones and in cell lines representing B-cells, monocytes, and myeloid cells.

The protein localises to the cell membrane. Its subcellular location is the cytolytic granule membrane. Its function is as follows. Regulates cytotoxic granule exocytosis in effector lymphocytes, thus acting as a critical mediator of inflammation in a broad range of infectious and non-infectious diseases. Essential for cytotoxic degranulation of natural killer (NK) cells and CD8(+) T-cells and for the activation of CD4(+) T-cells following infection. Plays a critical role in CD8(+) T-cell and NK cell-mediated cytolysis of target cells and contributes to the cytolytic activity via the perforin/granzyme pathway by enhancing exocytosis of LAMP1-carrying lytic granules. Contributes to NK cell-mediated control of cancer metastasis. This Homo sapiens (Human) protein is Protein NKG7 (NKG7).